The sequence spans 199 residues: Ribonuclease HII (199 aa).

Residues 10–199 (RIEAGCDEAG…LLPEQLTLGF (190 aa)) form the RNase H type-2 domain. The a divalent metal cation site is built by Asp16, Glu17, and Asp108.

This sequence belongs to the RNase HII family. It depends on Mn(2+) as a cofactor. Mg(2+) serves as cofactor.

It localises to the cytoplasm. The enzyme catalyses Endonucleolytic cleavage to 5'-phosphomonoester.. Its function is as follows. Endonuclease that specifically degrades the RNA of RNA-DNA hybrids. The chain is Ribonuclease HII from Parabacteroides distasonis (strain ATCC 8503 / DSM 20701 / CIP 104284 / JCM 5825 / NCTC 11152).